Here is a 113-residue protein sequence, read N- to C-terminus: Large ribosomal subunit protein eL30 (113 aa).

Belongs to the eukaryotic ribosomal protein eL30 family.

The sequence is that of Large ribosomal subunit protein eL30 (RpL30) from Spodoptera frugiperda (Fall armyworm).